A 215-amino-acid chain; its full sequence is A-type ATP synthase subunit E (215 aa).

This sequence belongs to the V-ATPase E subunit family. Has multiple subunits with at least A(3), B(3), C, D, E, F, H, I and proteolipid K(x).

It is found in the cell membrane. Functionally, component of the A-type ATP synthase that produces ATP from ADP in the presence of a proton gradient across the membrane. This chain is A-type ATP synthase subunit E, found in Thermofilum pendens (strain DSM 2475 / Hrk 5).